A 430-amino-acid polypeptide reads, in one-letter code: Serine--tRNA ligase (430 aa).

236–238 (TAE) is an L-serine binding site. 267–269 (RRE) lines the ATP pocket. Glutamate 290 is a binding site for L-serine. Position 354-357 (354-357 (EISS)) interacts with ATP. L-serine is bound at residue serine 390.

This sequence belongs to the class-II aminoacyl-tRNA synthetase family. Type-1 seryl-tRNA synthetase subfamily. Homodimer. The tRNA molecule binds across the dimer.

Its subcellular location is the cytoplasm. It catalyses the reaction tRNA(Ser) + L-serine + ATP = L-seryl-tRNA(Ser) + AMP + diphosphate + H(+). It carries out the reaction tRNA(Sec) + L-serine + ATP = L-seryl-tRNA(Sec) + AMP + diphosphate + H(+). It participates in aminoacyl-tRNA biosynthesis; selenocysteinyl-tRNA(Sec) biosynthesis; L-seryl-tRNA(Sec) from L-serine and tRNA(Sec): step 1/1. Functionally, catalyzes the attachment of serine to tRNA(Ser). Is also able to aminoacylate tRNA(Sec) with serine, to form the misacylated tRNA L-seryl-tRNA(Sec), which will be further converted into selenocysteinyl-tRNA(Sec). The protein is Serine--tRNA ligase of Gloeothece citriformis (strain PCC 7424) (Cyanothece sp. (strain PCC 7424)).